Here is a 724-residue protein sequence, read N- to C-terminus: Putative methyltransferase NSUN7 (724 aa).

The active-site Nucleophile is the Cys-444. Disordered regions lie at residues 542–574 (KTLKRDKKRKKSKALPSRAPHHGDPLRDHLAVD), 595–629 (ISTSTKMSAPAKTVSQAGTSSQVRKPSKPLSTPLV), and 698–724 (TSSTSRRKEKVKESTTSSHVRHPRPWL). Residues 543 to 554 (TLKRDKKRKKSK) are compositionally biased toward basic residues. Positions 562-572 (HHGDPLRDHLA) are enriched in basic and acidic residues. The span at 595 to 618 (ISTSTKMSAPAKTVSQAGTSSQVR) shows a compositional bias: polar residues.

It belongs to the class I-like SAM-binding methyltransferase superfamily. RsmB/NOP family. As to expression, expressed in testis.

Its function is as follows. May have S-adenosyl-L-methionine-dependent methyl-transferase activity. The polypeptide is Putative methyltransferase NSUN7 (Nsun7) (Mus musculus (Mouse)).